A 249-amino-acid polypeptide reads, in one-letter code: Transmembrane protein 150C (249 aa).

At 1-9 (MDGKKCSVW) the chain is on the cytoplasmic side. The chain crosses the membrane as a helical span at residues 10–30 (MFLPLVFTLFTSAGLWIVYFI). The Extracellular portion of the chain corresponds to 31–64 (AVEDDKILPLNSAARKSGVKHAPYISFAGDDPPA). The chain crosses the membrane as a helical span at residues 65-85 (SCVFSQVMNMAAFLALVVAVL). Topologically, residues 86 to 97 (RFIQLKPKVLNP) are cytoplasmic. A helical transmembrane segment spans residues 98–118 (WLNISGLVALCLASFGMTLLG). Residues 119 to 130 (NFQLTNDEEIHN) lie on the Extracellular side of the membrane. Residues 131–151 (VGTSLTFGFGTLTCWIQAALT) form a helical membrane-spanning segment. The Cytoplasmic segment spans residues 152-168 (LKVNIKNEGRRAGIPRV). The helical transmembrane segment at 169–189 (ILSAVITLCVVLYFILMAQDI) threads the bilayer. The Extracellular portion of the chain corresponds to 190-192 (HMY). Residues 193 to 213 (AARVQWGLVMCFLAYFGTLAV) traverse the membrane as a helical segment. Over 214-249 (EFRHYRYEIVCSEYQENFLSFSESLSEASEYQTDQV) the chain is Cytoplasmic.

The protein belongs to the DRAM/TMEM150 family.

The protein resides in the cell membrane. Its subcellular location is the lysosome membrane. The enzyme catalyses Ca(2+)(in) = Ca(2+)(out). It catalyses the reaction Na(+)(in) = Na(+)(out). The catalysed reaction is K(+)(in) = K(+)(out). It carries out the reaction Mg(2+)(in) = Mg(2+)(out). In terms of biological role, nonselective cationic channel with high permeability to Ca(2+). Component of a mechanosensitive cation channel. Confers mechanically activated (MA) currents with slow inactivation kinetics. May contribute to proprioception. The protein is Transmembrane protein 150C (Tmem150c) of Rattus norvegicus (Rat).